A 504-amino-acid polypeptide reads, in one-letter code: SPbeta prophage-derived uncharacterized protein YorI (504 aa).

The sequence is that of SPbeta prophage-derived uncharacterized protein YorI (yorI) from Bacillus subtilis (strain 168).